We begin with the raw amino-acid sequence, 446 residues long: Glutamate--tRNA ligase (446 aa).

The short motif at 9-19 (PSPTGLLHVGN) is the 'HIGH' region element. The 'KMSKS' region signature appears at 240–244 (GLSKR). K243 provides a ligand contact to ATP.

It belongs to the class-I aminoacyl-tRNA synthetase family. Glutamate--tRNA ligase type 1 subfamily. In terms of assembly, monomer.

Its subcellular location is the cytoplasm. The catalysed reaction is tRNA(Glu) + L-glutamate + ATP = L-glutamyl-tRNA(Glu) + AMP + diphosphate. In terms of biological role, catalyzes the attachment of glutamate to tRNA(Glu) in a two-step reaction: glutamate is first activated by ATP to form Glu-AMP and then transferred to the acceptor end of tRNA(Glu). This is Glutamate--tRNA ligase from Azospirillum brasilense.